A 283-amino-acid chain; its full sequence is uncharacterized protein (283 aa).

The first 21 residues, 1–21 (MKLKLKFLLISLLGSSLLLSA), serve as a signal peptide directing secretion. Cysteine 22 is lipidated: N-palmitoyl cysteine. Cysteine 22 carries S-diacylglycerol cysteine lipidation.

This sequence belongs to the MG439/MG440 family.

The protein localises to the cell membrane. This is an uncharacterized protein from Mycoplasma pneumoniae (strain ATCC 29342 / M129 / Subtype 1) (Mycoplasmoides pneumoniae).